A 351-amino-acid chain; its full sequence is Uroporphyrinogen decarboxylase (351 aa).

Residues 25 to 29 (RQAGR), aspartate 74, tyrosine 151, serine 206, and histidine 325 contribute to the substrate site.

This sequence belongs to the uroporphyrinogen decarboxylase family. Homodimer.

It localises to the cytoplasm. The enzyme catalyses uroporphyrinogen III + 4 H(+) = coproporphyrinogen III + 4 CO2. It functions in the pathway porphyrin-containing compound metabolism; protoporphyrin-IX biosynthesis; coproporphyrinogen-III from 5-aminolevulinate: step 4/4. Functionally, catalyzes the decarboxylation of four acetate groups of uroporphyrinogen-III to yield coproporphyrinogen-III. The protein is Uroporphyrinogen decarboxylase of Chlorobium phaeobacteroides (strain BS1).